A 387-amino-acid chain; its full sequence is 8-amino-7-oxononanoate synthase (387 aa).

109–110 contacts pyridoxal 5'-phosphate; it reads GY. A substrate-binding site is contributed by H134. Pyridoxal 5'-phosphate is bound by residues S182, H214, and T242. N6-(pyridoxal phosphate)lysine is present on K245. Residue T359 coordinates substrate.

It belongs to the class-II pyridoxal-phosphate-dependent aminotransferase family. BioF subfamily. Homodimer. It depends on pyridoxal 5'-phosphate as a cofactor.

It catalyses the reaction 6-carboxyhexanoyl-[ACP] + L-alanine + H(+) = (8S)-8-amino-7-oxononanoate + holo-[ACP] + CO2. It functions in the pathway cofactor biosynthesis; biotin biosynthesis. In terms of biological role, catalyzes the decarboxylative condensation of pimeloyl-[acyl-carrier protein] and L-alanine to produce 8-amino-7-oxononanoate (AON), [acyl-carrier protein], and carbon dioxide. The sequence is that of 8-amino-7-oxononanoate synthase from Haemophilus ducreyi (strain 35000HP / ATCC 700724).